Consider the following 475-residue polypeptide: MQILFVASEVGPWSKTGGLGDVAGALPQALAERGNEVAVVTPRHGSIDPRAAGLQPVRTALQVRGEPVSLWVKRGPAPVYFVEHPHLFGNRRGLYGEGGRDHGDNAERFAFLTRAALALPGALGLRPRILHLNDWQCGLGPWLLRHEHARDPALAGARTVFTIHNLAYQGLFPKQVLPALGLPWEVFRWEAMEFFDQLSFMKAGLAFADALTTVSPTYAREILTPEGGASLDALLRHRARDLHGILNGIDVHAWDPARDPHLPAHFTAGDLAGKAACKAALQREVGLPVRPEVPVAGLVTRLAEQKGIDLVAAALPALLARDVQVVLLGSGDPAYQETFARAAREHPDRVAARIGFDEGLAHRIEAGADLFLMPSRFEPCGLNQMYSLRYGTVPVVRAVGGLADTVEDFDGVARGTGFRFSEYTPQALLTATRRALDVFRDRRAWRGLVERGMAEDNSWERSAARYEALYRTLAP.

Residue lysine 15 coordinates ADP-alpha-D-glucose.

This sequence belongs to the glycosyltransferase 1 family. Bacterial/plant glycogen synthase subfamily.

It catalyses the reaction [(1-&gt;4)-alpha-D-glucosyl](n) + ADP-alpha-D-glucose = [(1-&gt;4)-alpha-D-glucosyl](n+1) + ADP + H(+). It functions in the pathway glycan biosynthesis; glycogen biosynthesis. Its function is as follows. Synthesizes alpha-1,4-glucan chains using ADP-glucose. The sequence is that of Glycogen synthase from Anaeromyxobacter sp. (strain K).